The following is a 29-amino-acid chain: Beta-theraphotoxin-Gr1a (29 aa).

3 disulfide bridges follow: Cys-2–Cys-16, Cys-9–Cys-21, and Cys-15–Cys-25.

This sequence belongs to the neurotoxin 30 (phrixotoxin) family. As to expression, expressed by the venom gland.

It is found in the secreted. In terms of biological role, inhibits voltage-gated sodium channels Nav1.1/SCN1A (IC(50)=630 nM), Nav1.2/SCN2A (IC(50)=230 nM), Nav1.3/SCN3A (IC(50)=770 nM), Nav1.4/SCN4A (IC(50)=1290 nM), Nav1.6/SCN8A (IC(50)=630 nM), Nav1.7/SCN9A (IC(50)=15.3-1000 nM) and potassium channels Kv11.1/KCNH2 (IC(50)=4.2 uM). The polypeptide is Beta-theraphotoxin-Gr1a (Grammostola rosea (Chilean rose tarantula)).